The primary structure comprises 307 residues: Leucine-rich repeat-containing protein 25 (307 aa).

The N-terminal stretch at 1 to 20 is a signal peptide; it reads MGGPLMWALLLPLLLHQAGS. Residues 21–168 are Extracellular-facing; it reads QTSSCSVLSG…SCPSGLTKIA (148 aa). 2 N-linked (GlcNAc...) asparagine glycosylation sites follow: asparagine 44 and asparagine 56. LRR repeat units follow at residues 63–86 and 87–110; these read SVQLLDLSANGLQRLPWSFFRDLE and QLQLLIVTNNSLDFVDRALXXXGC. Asparagine 95, asparagine 132, and asparagine 151 each carry an N-linked (GlcNAc...) asparagine glycan. A helical membrane pass occupies residues 169–189; the sequence is IGALAASGSLLLVLAIAGPVL. The Cytoplasmic portion of the chain corresponds to 190–307; the sequence is AWRFCRHRMD…DDEEYVVPGR (118 aa). The interval 205-249 is disordered; that stretch reads TWASQDGSRSGSGRQPRYSSQGRRPKSPANTPPRSSTPDYENVFV. The span at 211 to 226 shows a compositional bias: low complexity; it reads GSRSGSGRQPRYSSQG. The segment covering 232 to 243 has biased composition (polar residues); that stretch reads PANTPPRSSTPD. Phosphotyrosine is present on tyrosine 286.

In terms of assembly, interacts with RIGI. Interacts with SQSTM1. Interacts with p65/RELA; this interaction promotes the degradation of RELA through autophagy.

It is found in the membrane. It localises to the cytoplasm. Functionally, plays a role in the inhibition of RLR-mediated type I interferon signaling pathway by targeting RIGI for autophagic degradation. Interacts specifically with ISG15-associated RIGI to promote interaction between RIGI and the autophagic cargo receptor p62/SQSTM1 to mediate RIGI degradation via selective autophagy. Plays also a role in the inhibition of NF-kappa-B signaling pathway and inflammatory response by promoting the degradation of p65/RELA. The protein is Leucine-rich repeat-containing protein 25 (LRRC25) of Bos taurus (Bovine).